The sequence spans 96 residues: Small ribosomal subunit protein bS6 (96 aa).

Belongs to the bacterial ribosomal protein bS6 family.

Binds together with bS18 to 16S ribosomal RNA. In Nocardioides sp. (strain ATCC BAA-499 / JS614), this protein is Small ribosomal subunit protein bS6.